Here is a 421-residue protein sequence, read N- to C-terminus: Indole-3-pyruvate monooxygenase YUCCA8 (421 aa).

Residue 30–35 (GAGPSG) coordinates FAD. 201–206 (GCGNSG) contacts NADP(+).

It belongs to the FMO family. FAD is required as a cofactor. In terms of tissue distribution, expressed in organs undergoing active growth and cell division.

It is found in the endoplasmic reticulum. It carries out the reaction indole-3-pyruvate + NADPH + O2 + H(+) = (indol-3-yl)acetate + CO2 + NADP(+) + H2O. Functionally, involved in auxin biosynthesis. Converts the indole-3-pyruvic acid (IPA) produced by the TAA family to indole-3-acetic acid (IAA). Seems not able to use tryptamine (TAM) as substrate. Probably responsible for auxin biosynthesis in leaves and involved in the regulation of lateral leaf growth. Required for maintaining water homeostasis and an appropriate root to shoot ratio. Required for the inhibition of root growth by ethylene in etiolated seedlings. Functions downstream of the ethylene-response transcription factor EIL1. The protein is Indole-3-pyruvate monooxygenase YUCCA8 of Oryza sativa subsp. indica (Rice).